A 215-amino-acid polypeptide reads, in one-letter code: Adenylate kinase (215 aa).

Residue 10 to 15 (GAGKGT) participates in ATP binding. The interval 30–59 (STGDMFRAAMKNNTELGRKAKSFMDNGDLV) is NMP. AMP-binding positions include T31, R36, 57 to 59 (DLV), 85 to 88 (GFPR), and Q92. Positions 126–163 (GRWICRTCGKTYHEIYNPPKVAGKCDLDGGELYQRDDD) are LID. R127 contributes to the ATP binding site. Positions 130 and 133 each coordinate Zn(2+). 136–137 (TY) contacts ATP. 2 residues coordinate Zn(2+): C150 and D153. AMP-binding residues include R160 and R171. Q199 contributes to the ATP binding site.

The protein belongs to the adenylate kinase family. Monomer.

Its subcellular location is the cytoplasm. It catalyses the reaction AMP + ATP = 2 ADP. It participates in purine metabolism; AMP biosynthesis via salvage pathway; AMP from ADP: step 1/1. Functionally, catalyzes the reversible transfer of the terminal phosphate group between ATP and AMP. Plays an important role in cellular energy homeostasis and in adenine nucleotide metabolism. The chain is Adenylate kinase from Listeria monocytogenes serotype 4a (strain HCC23).